The chain runs to 397 residues: Elongation factor Tu (397 aa).

One can recognise a tr-type G domain in the interval 10–206 (KPHVNIGTIG…AVDTSIPQPE (197 aa)). A G1 region spans residues 19 to 26 (GHIDHGKT). GTP is bound at residue 19-26 (GHIDHGKT). Mg(2+) is bound at residue T26. The interval 62–66 (GITIS) is G2. Positions 83–86 (DCPG) are G3. GTP-binding positions include 83 to 87 (DCPGH) and 138 to 141 (NKSD). The G4 stretch occupies residues 138–141 (NKSD). The tract at residues 176 to 178 (SAL) is G5.

Belongs to the TRAFAC class translation factor GTPase superfamily. Classic translation factor GTPase family. EF-Tu/EF-1A subfamily. As to quaternary structure, monomer.

It is found in the cytoplasm. The catalysed reaction is GTP + H2O = GDP + phosphate + H(+). In terms of biological role, GTP hydrolase that promotes the GTP-dependent binding of aminoacyl-tRNA to the A-site of ribosomes during protein biosynthesis. In Salinispora tropica (strain ATCC BAA-916 / DSM 44818 / JCM 13857 / NBRC 105044 / CNB-440), this protein is Elongation factor Tu.